A 570-amino-acid chain; its full sequence is Dihydroxy-acid dehydratase 2 (570 aa).

Cys51 provides a ligand contact to [2Fe-2S] cluster. Asp83 lines the Mg(2+) pocket. Cys124 lines the [2Fe-2S] cluster pocket. Mg(2+) is bound by residues Asp125 and Lys126. Lys126 is modified (N6-carboxylysine). Cys196 is a binding site for [2Fe-2S] cluster. A Mg(2+)-binding site is contributed by Glu446. The Proton acceptor role is filled by Ser472.

This sequence belongs to the IlvD/Edd family. In terms of assembly, homodimer. The cofactor is [2Fe-2S] cluster. Mg(2+) is required as a cofactor.

The catalysed reaction is (2R)-2,3-dihydroxy-3-methylbutanoate = 3-methyl-2-oxobutanoate + H2O. The enzyme catalyses (2R,3R)-2,3-dihydroxy-3-methylpentanoate = (S)-3-methyl-2-oxopentanoate + H2O. The protein operates within amino-acid biosynthesis; L-isoleucine biosynthesis; L-isoleucine from 2-oxobutanoate: step 3/4. It participates in amino-acid biosynthesis; L-valine biosynthesis; L-valine from pyruvate: step 3/4. Its function is as follows. Functions in the biosynthesis of branched-chain amino acids. Catalyzes the dehydration of (2R,3R)-2,3-dihydroxy-3-methylpentanoate (2,3-dihydroxy-3-methylvalerate) into 2-oxo-3-methylpentanoate (2-oxo-3-methylvalerate) and of (2R)-2,3-dihydroxy-3-methylbutanoate (2,3-dihydroxyisovalerate) into 2-oxo-3-methylbutanoate (2-oxoisovalerate), the penultimate precursor to L-isoleucine and L-valine, respectively. In Bordetella bronchiseptica (strain ATCC BAA-588 / NCTC 13252 / RB50) (Alcaligenes bronchisepticus), this protein is Dihydroxy-acid dehydratase 2.